The chain runs to 261 residues: Pantothenate synthetase (261 aa).

29 to 36 serves as a coordination point for ATP; the sequence is MGALHNGH. Histidine 36 functions as the Proton donor in the catalytic mechanism. Glutamine 60 is a binding site for (R)-pantoate. Glutamine 60 lines the beta-alanine pocket. 147-150 serves as a coordination point for ATP; sequence GEKD. Glutamine 153 is a binding site for (R)-pantoate. Position 184 to 187 (184 to 187) interacts with ATP; it reads LSSR.

It belongs to the pantothenate synthetase family. As to quaternary structure, homodimer.

The protein resides in the cytoplasm. It catalyses the reaction (R)-pantoate + beta-alanine + ATP = (R)-pantothenate + AMP + diphosphate + H(+). It functions in the pathway cofactor biosynthesis; (R)-pantothenate biosynthesis; (R)-pantothenate from (R)-pantoate and beta-alanine: step 1/1. Functionally, catalyzes the condensation of pantoate with beta-alanine in an ATP-dependent reaction via a pantoyl-adenylate intermediate. The sequence is that of Pantothenate synthetase from Francisella tularensis subsp. mediasiatica (strain FSC147).